The sequence spans 282 residues: Complement component 1 Q subcomponent-binding protein, mitochondrial (282 aa).

A mitochondrion-targeting transit peptide spans 1 to 70 (MLPLLRCVPR…PRGPCACGCG (70 aa)). Residues 76–93 (TEGDKAFVDFLNDEIKEE) form a C1q binding region. At lysine 91 the chain carries N6-acetyllysine. The segment at 137 to 163 (NSIPPTFDGEEEPTQGQKVEEQEPELT) is disordered. Positions 168 to 213 (FVVEVIKNDDGKKALVLDCHYPEDEVGQEDEAESDIFSIREVSFQS) are interaction with MAVS. Tyrosine 188 carries the post-translational modification Phosphotyrosine. 2 positions are modified to phosphoserine: serine 201 and serine 205.

The protein belongs to the MAM33 family. In terms of assembly, homotrimer; three monomers form a donut-shaped structure with an unusually asymmetric charge distribution on the surface. Interacts with CDK13, HRK, VTN, NFYB, ADRA1B, FOXC1, DDX21, DDX50, NCL, SRSF1 and SRSF9. Interacts with CD93; the association may represent a cell surface C1q receptor. Interacts with KRT1; the association represents a cell surface kininogen receptor. Interacts with CD209; the interaction is indicative for a C1q:C1QBP:CD209 signaling complex. Interacts with FBL and RRP1; the respective interactions with C1QBP are competitive. Probably associates with the mitoribosome. Interacts with MAVS; the interaction occurs upon viral transfection. Interacts with PPIF. Interacts with U2AF1L4. Interacts with PLEKHN1. Interacts with VGF-derived peptide TLQP-21. Interacts with MRE11 and RAD50; forming the MRC (MRE11-RAD50-C1QBP) complex that inhibits the activity of MRE11. As to quaternary structure, (Microbial infection) Interacts with Rubella virus capsid protein; the interaction occurs in mitochondria. (Microbial infection) Interacts with L.monocytogenes InlB.

Its subcellular location is the mitochondrion matrix. The protein resides in the nucleus. It localises to the cell membrane. It is found in the secreted. The protein localises to the cytoplasm. Its subcellular location is the nucleolus. Functionally, multifunctional and multicompartmental protein involved in inflammation and infection processes, ribosome biogenesis, protein synthesis in mitochondria, regulation of apoptosis, transcriptional regulation and pre-mRNA splicing. At the cell surface is thought to act as an endothelial receptor for plasma proteins of the complement and kallikrein-kinin cascades. Putative receptor for C1q; specifically binds to the globular 'heads' of C1q thus inhibiting C1; may perform the receptor function through a complex with C1qR/CD93. In complex with cytokeratin-1/KRT1 is a high affinity receptor for kininogen-1/HMWK. Can also bind other plasma proteins, such as coagulation factor XII leading to its autoactivation. May function to bind initially fluid kininogen-1 to the cell membrane. The secreted form may enhance both extrinsic and intrinsic coagulation pathways. It is postulated that the cell surface form requires docking with transmembrane proteins for downstream signaling which might be specific for a cell-type or response. By acting as C1q receptor is involved in chemotaxis of immature dendritic cells and neutrophils and is proposed to signal through CD209/DC-SIGN on immature dendritic cells, through integrin alpha-4/beta-1 during trophoblast invasion of the decidua, and through integrin beta-1 during endothelial cell adhesion and spreading. Signaling involved in inhibition of innate immune response is implicating the PI3K-AKT/PKB pathway. Required for protein synthesis in mitochondria. In mitochondrial translation may be involved in formation of functional 55S mitoribosomes; the function seems to involve its RNA-binding activity. Acts as a RNA modification reader, which specifically recognizes and binds mitochondrial RNAs modified by C5-methylcytosine (m5C) in response to stress, and promotes recruitment of the mitochondrial degradosome complex, leading to their degradation. May be involved in the nucleolar ribosome maturation process; the function may involve the exchange of FBL for RRP1 in the association with pre-ribosome particles. Involved in regulation of RNA splicing by inhibiting the RNA-binding capacity of SRSF1 and its phosphorylation. Is required for the nuclear translocation of splicing factor U2AF1L4. Involved in regulation of CDKN2A- and HRK-mediated apoptosis. Stabilizes mitochondrial CDKN2A isoform smARF. May be involved in regulation of FOXC1 transcriptional activity and NFY/CCAAT-binding factor complex-mediated transcription. May play a role in antibacterial defense as it can bind to cell surface hyaluronan and inhibit Streptococcus pneumoniae hyaluronate lyase. May be involved in modulation of the immune response; ligation by HCV core protein is resulting in suppression of interleukin-12 production in monocyte-derived dendritic cells. Involved in regulation of antiviral response by inhibiting RIGI- and IFIH1-mediated signaling pathways probably involving its association with MAVS after viral infection. Acts as a regulator of DNA repair via homologous recombination by inhibiting the activity of MRE11: interacts with unphosphorylated MRE11 and RAD50 in absence of DNA damage, preventing formation and activity of the MRN complex. Following DNA damage, dissociates from phosphorylated MRE11, allowing formation of the MRN complex. Its function is as follows. (Microbial infection) During bacterial infection processes acts as an attachment site for microbial proteins, including Listeria monocytogenes internalin B (InlB). This Chlorocebus aethiops (Green monkey) protein is Complement component 1 Q subcomponent-binding protein, mitochondrial (C1QBP).